The primary structure comprises 213 residues: Kynurenine formamidase (213 aa).

W18 contributes to the substrate binding site. The Zn(2+) site is built by H48, H52, and D54. The Proton donor/acceptor role is filled by H58. Positions 160 and 172 each coordinate Zn(2+).

Belongs to the Cyclase 1 superfamily. KynB family. Homodimer. The cofactor is Zn(2+).

The enzyme catalyses N-formyl-L-kynurenine + H2O = L-kynurenine + formate + H(+). It functions in the pathway amino-acid degradation; L-tryptophan degradation via kynurenine pathway; L-kynurenine from L-tryptophan: step 2/2. Catalyzes the hydrolysis of N-formyl-L-kynurenine to L-kynurenine, the second step in the kynurenine pathway of tryptophan degradation. This Burkholderia ambifaria (strain ATCC BAA-244 / DSM 16087 / CCUG 44356 / LMG 19182 / AMMD) (Burkholderia cepacia (strain AMMD)) protein is Kynurenine formamidase.